A 363-amino-acid chain; its full sequence is Flagellar P-ring protein 2 (363 aa).

Positions 1-18 are cleaved as a signal peptide; sequence MLIRLLLLVICLAGPGVA.

This sequence belongs to the FlgI family. As to quaternary structure, the basal body constitutes a major portion of the flagellar organelle and consists of four rings (L,P,S, and M) mounted on a central rod.

It is found in the periplasm. It localises to the bacterial flagellum basal body. Its function is as follows. Assembles around the rod to form the L-ring and probably protects the motor/basal body from shearing forces during rotation. This is Flagellar P-ring protein 2 from Cereibacter sphaeroides (strain ATCC 17023 / DSM 158 / JCM 6121 / CCUG 31486 / LMG 2827 / NBRC 12203 / NCIMB 8253 / ATH 2.4.1.) (Rhodobacter sphaeroides).